The following is a 518-amino-acid chain: Nuclear receptor ROR-gamma (518 aa).

The segment at M1 to P30 is modulating. 2 consecutive NR C4-type zinc fingers follow at residues C31 to C51 and C67 to C91. A DNA-binding region (nuclear receptor) is located at residues C31–M96. Disordered stretches follow at residues R105 to G183 and H238 to S258. Residues K109–V118 show a composition bias toward basic and acidic residues. Residues Q119–Q130 show a composition bias toward low complexity. One can recognise an NR LBD domain in the interval E269 to T508. Positions L501–F506 match the AF-2 motif.

This sequence belongs to the nuclear hormone receptor family. NR1 subfamily. In terms of assembly, interacts (via AF-2 motif) with the coactivators NCOA1, NCOA2 and PPARGC1A (via LXXLL motif). Interacts with the corepressor NCOR1. Interacts with CRY1. Interacts (via AF-2 motif) with PROX1. Interacts with FOXP3. Interacts with NR0B2.

It is found in the nucleus. In terms of biological role, nuclear receptor that binds DNA as a monomer to ROR response elements (RORE) containing a single core motif half-site 5'-AGGTCA-3' preceded by a short A-T-rich sequence. Key regulator of cellular differentiation, immunity, peripheral circadian rhythm as well as lipid, steroid, xenobiotics and glucose metabolism. Considered to have intrinsic transcriptional activity, have some natural ligands like oxysterols that act as agonists (25-hydroxycholesterol) or inverse agonists (7-oxygenated sterols), enhancing or repressing the transcriptional activity, respectively. Recruits distinct combinations of cofactors to target gene regulatory regions to modulate their transcriptional expression, depending on the tissue, time and promoter contexts. Regulates the circadian expression of clock genes such as CRY1, BMAL1 and NR1D1 in peripheral tissues and in a tissue-selective manner. Competes with NR1D1 for binding to their shared DNA response element on some clock genes such as BMAL1, CRY1 and NR1D1 itself, resulting in NR1D1-mediated repression or RORC-mediated activation of the expression, leading to the circadian pattern of clock genes expression. Therefore influences the period length and stability of the clock. Involved in the regulation of the rhythmic expression of genes involved in glucose and lipid metabolism, including PLIN2 and AVPR1A. Negative regulator of adipocyte differentiation through the regulation of early phase genes expression, such as MMP3. Controls adipogenesis as well as adipocyte size and modulates insulin sensitivity in obesity. In liver, has specific and redundant functions with RORA as positive or negative modulator of expression of genes encoding phase I and Phase II proteins involved in the metabolism of lipids, steroids and xenobiotics, such as SULT1E1. Also plays a role in the regulation of hepatocyte glucose metabolism through the regulation of G6PC1 and PCK1. Essential for thymopoiesis and the development of several secondary lymphoid tissues, including lymph nodes and Peyer's patches. Required for the generation of LTi (lymphoid tissue inducer) cells. Regulates thymocyte survival through DNA-binding on ROREs of target gene promoter regions and recruitment of coactivaros via the AF-2. Also plays a key role, downstream of IL6 and TGFB and synergistically with RORA, for lineage specification of uncommitted CD4(+) T-helper (T(H)) cells into T(H)17 cells, antagonizing the T(H)1 program. Probably regulates IL17 and IL17F expression on T(H) by binding to the essential enhancer conserved non-coding sequence 2 (CNS2) in the IL17-IL17F locus. May also play a role in the pre-TCR activation cascade leading to the maturation of alpha/beta T-cells and may participate in the regulation of DNA accessibility in the TCR-J(alpha) locus. Regulates the rhythmic expression of PROX1 and promotes its nuclear localization. Plays an indispensable role in the induction of IFN-gamma dependent anti-mycobacterial systemic immunity. The chain is Nuclear receptor ROR-gamma (RORC) from Pongo abelii (Sumatran orangutan).